A 541-amino-acid polypeptide reads, in one-letter code: Glutamyl-tRNA(Gln) amidotransferase subunit A, chloroplastic/mitochondrial (541 aa).

Catalysis depends on charge relay system residues Lys-121 and Ser-196. Ser-220 serves as the catalytic Acyl-ester intermediate.

It belongs to the amidase family. GatA subfamily. In terms of assembly, subunit of the heterotrimeric GatCAB amidotransferase (AdT) complex, composed of A, B and C subunits.

The protein resides in the mitochondrion. It localises to the plastid. It is found in the chloroplast stroma. It carries out the reaction L-glutamyl-tRNA(Gln) + L-glutamine + ATP + H2O = L-glutaminyl-tRNA(Gln) + L-glutamate + ADP + phosphate + H(+). Its function is as follows. Allows the formation of correctly charged Gln-tRNA(Gln) through the transamidation of misacylated Glu-tRNA(Gln) in chloroplasts and mitochondria. The reaction takes place in the presence of glutamine and ATP through an activated gamma-phospho-Glu-tRNA(Gln). This Sorghum bicolor (Sorghum) protein is Glutamyl-tRNA(Gln) amidotransferase subunit A, chloroplastic/mitochondrial.